A 576-amino-acid polypeptide reads, in one-letter code: Citrinin biosynthesis transcriptional activator ctnR (576 aa).

A disordered region spans residues Met1 to Arg27. Positions Cys29–Cys56 form a DNA-binding region, zn(2)-C6 fungal-type. The segment at Ser102–Pro148 is disordered. Residues Ser114 to Ser124 show a composition bias toward low complexity. A compositionally biased stretch (polar residues) spans Leu137–Pro148.

It is found in the nucleus. Functionally, transcription factor that regulates the expression of the gene cluster that mediates the biosynthesis of the mycotoxin citrinin, a hepato-nephrotoxic compound to humans due to inhibition of respiration complex III. The protein is Citrinin biosynthesis transcriptional activator ctnR of Monascus purpureus (Red mold).